Reading from the N-terminus, the 540-residue chain is MSSEKVKRVEADATDLLASLSIDKSGEKLEEIKKGSTPDPSDLLGGLSLKEGDSKKPEEKKEVVEEPENKEINDDKKDEDKKDESKDEVKDGDGAKEETKEEVKEESKEEPKEPKEPKEPATNLIKSSYEVKVKLADIQADPNSPLYSVKSFEELGLSPELLKGLYAMKFNKPSKIQEKALPLLLSNPPRNMIGQSQSGTGKTAAFSLTMLSRVDPTIKMPQCLCLSPTRELARQTLEVITTMGKFTNITTQLVVPNAIPRGSSVNAQVLVGTPGIAIDLIRRRQLNLSKMKVFVLDEADNMLEAQGLGDQAIRVKKALPRGVQLVLFSATFPTEVREYAERLVPDANSLELKQEELNVDGIKQLYMDCRSEQHKFEVLCELYGLLTIGSSIIFVEKKETADVLYGKMKKEGHTVSVLHGGLDNTDRDRLIDDFREGRSKVLITTNVLARGIDIASVSMVVNYDMPTDKYGKPDPSTYLHRIGRTGRFGRVGVSISFIHDRRSYDILMAIKAYFGNVEMTRVPTDDWDEVEKIVKKVIKS.

Basic and acidic residues-rich tracts occupy residues 24–36 (KSGE…KKGS) and 50–119 (KEGD…EPKE). Residues 24 to 124 (KSGEKLEEIK…KEPKEPATNL (101 aa)) form a disordered region. The short motif at 150–178 (KSFEELGLSPELLKGLYAMKFNKPSKIQE) is the Q motif element. Residues 183–350 (LLLSNPPRNM…ERLVPDANSL (168 aa)) enclose the Helicase ATP-binding domain. 196-203 (SQSGTGKT) contributes to the ATP binding site. Residues 297–300 (DEAD) carry the DEAD box motif. The Helicase C-terminal domain occupies 361–538 (GIKQLYMDCR…EVEKIVKKVI (178 aa)).

Belongs to the DEAD box helicase family. DDX19/DBP5 subfamily. In terms of assembly, associates with the nuclear pore complex.

Its subcellular location is the cytoplasm. The protein resides in the nucleus. It is found in the nuclear pore complex. The protein localises to the nucleus membrane. It catalyses the reaction ATP + H2O = ADP + phosphate + H(+). In terms of biological role, ATP-dependent RNA helicase associated with the nuclear pore complex and essential for mRNA export from the nucleus. May participate in a terminal step of mRNA export through the removal of proteins that accompany mRNA through the nucleopore complex. May also be involved in early transcription. The protein is ATP-dependent RNA helicase DBP5 (DBP5) of Candida albicans (strain SC5314 / ATCC MYA-2876) (Yeast).